The following is a 288-amino-acid chain: HTH-type transcriptional regulator CzcR (288 aa).

One can recognise an HTH lysR-type domain in the interval 1–58; that stretch reads MELRDLQIFKCVAHHKSITGAAKELNYVQSNVTARIKQLENELKTPLFNRHKKGVSLS. Residues 18-37 constitute a DNA-binding region (H-T-H motif); it reads ITGAAKELNYVQSNVTARIK.

It belongs to the LysR transcriptional regulatory family.

This is HTH-type transcriptional regulator CzcR (czcR) from Bacillus subtilis (strain 168).